Here is a 926-residue protein sequence, read N- to C-terminus: MSYTLDSLGNPSAYRRVTETRSSFSRISGSPSSGFRSQSWSRGSPSTVSSSYKRSALAPRLTYSSAMLSSAESSLDFSQSSSLLDGGSGPGGDYKLSRSNEKEQIQGLNDRFAGYIEKVHYLEQQNKEIEAEIQALRQKQASHAQLGDAYDQEIRELRATLEMVNHEKAQVQLDSDHLEEDIHRLKERFEEEARLRDDTEAAIRALRKDIEESSLVKVELDKKVQSLQDEVAFLRSNHEEEVADLLAQIQASHITVERKDYLKTDISTALKEIRSQLESHSDQNMHQAEEWFKCRYAKLTEAAEQNKEAIRSAKEEIAEYRRQLQSKSIELESVRGTKESLERQLSDIEERHNHDLSSYQDTIQQLENELRGTKWEMARHLREYQDLLNVKMALDIEIAAYRKLLEGEETRFSTFAGSITGPLYTHRQPSIAISSKIQKTKVEAPKLKVQHKFVEEIIEETKVEDEKSEMEEALTAITEELAVSVKEEVKEEEAEEKEEKEEAEEEVVAAKKSPVKATAPELKEEEGEKEEEEGQEEEEEEEEAAKSDQAEEGGSEKEGSSEKEEGEQEEEGETEAEGEGEEAAAEAKEEKKMEEKAEEVAPKEELAAEAKVEKPEKAKSPVAKSPTTKSPTAKSPEAKSPEAKSPTAKSPTAKSPVAKSPTAKSPEAKSPEAKSPTAKSPTAKSPAAKSPAPKSPVEEVKPKAEAGAEKGEQKEKVEEEKKEAKESPKEEKAEKKEEKPKDVPEKKKAESPVKAESPVKEEVPAKPVKVSPEKEAKEEEKPQEKEKEKEKVEEVGGKEEGGLKESRKEDIAINGEVEGKEEEQETKEKGSGGEEEKGVVTNGLDVSPGDEKKGGDKSEEKVVVTKMVEKITSEGGDGATKYITKSVTVTQKVEEHEETFEEKLVSTKKVEKVTSHAIVKEVTQSD.

The segment covering 1 to 10 has biased composition (polar residues); sequence MSYTLDSLGN. 2 disordered regions span residues 1–51 and 79–102; these read MSYT…VSSS and QSSS…SNEK. Serine 2 is subject to N-acetylserine. Residues 2–104 are head; it reads SYTLDSLGNP…KLSRSNEKEQ (103 aa). Low complexity predominate over residues 21–44; the sequence is RSSFSRISGSPSSGFRSQSWSRGS. Phosphoserine is present on serine 30. Position 42 is an omega-N-methylarginine (arginine 42). Threonine 47 is a glycosylation site (O-linked (GlcNAc) threonine). A Phosphoserine modification is found at serine 99. One can recognise an IF rod domain in the interval 101–412; sequence EKEQIQGLND…KLLEGEETRF (312 aa). The segment at 105 to 136 is coil 1A; the sequence is IQGLNDRFAGYIEKVHYLEQQNKEIEAEIQAL. The linker 1 stretch occupies residues 137–149; the sequence is RQKQASHAQLGDA. Residues 150–248 are coil 1B; sequence YDQEIRELRA…EEEVADLLAQ (99 aa). Serine 226 is modified (phosphoserine). Residues 249-265 form a linker 12 region; it reads IQASHITVERKDYLKTD. The segment at 266–287 is coil 2A; that stretch reads ISTALKEIRSQLESHSDQNMHQ. Residues 288 to 291 are linker 2; sequence AEEW. Residues 292–412 are coil 2B; the sequence is FKCRYAKLTE…KLLEGEETRF (121 aa). Tyrosine 320 is modified (phosphotyrosine). Phosphoserine occurs at positions 346, 418, 430, 468, and 484. Positions 413–926 are tail; the sequence is STFAGSITGP…AIVKEVTQSD (514 aa). Positions 487–860 are disordered; sequence EEVKEEEAEE…EKKGGDKSEE (374 aa). Residues 490–507 are compositionally biased toward acidic residues; sequence KEEEAEEKEEKEEAEEEV. Residues 512–516 form repeat 1; sequence KSPVK. Positions 512-698 are 17 X 5 AA approximate tandem repeats of K-S-P-[TVEA]-[AKETP]; sequence KSPVKATAPE…KSPAPKSPVE (187 aa). The residue at position 513 (serine 513) is a Phosphoserine. A compositionally biased stretch (acidic residues) spans 523-543; that stretch reads KEEEGEKEEEEGQEEEEEEEE. The span at 544–563 shows a compositional bias: basic and acidic residues; that stretch reads AAKSDQAEEGGSEKEGSSEK. Serine 547, serine 555, serine 560, and serine 561 each carry phosphoserine. Residues 564-584 are compositionally biased toward acidic residues; the sequence is EEGEQEEEGETEAEGEGEEAA. At threonine 574 the chain carries Phosphothreonine. Basic and acidic residues predominate over residues 585-619; that stretch reads AEAKEEKKMEEKAEEVAPKEELAAEAKVEKPEKAK. 16 consecutive repeat copies span residues 619–623, 624–628, 629–633, 634–638, 639–643, 644–648, 649–653, 654–658, 659–663, 664–668, 669–673, 674–678, 679–683, 684–688, 689–693, and 694–698. Threonine 628 bears the Phosphothreonine mark. Phosphoserine is present on residues serine 630, serine 635, and serine 640. Position 647 is a phosphothreonine (threonine 647). Phosphoserine occurs at positions 650 and 655. A phosphoserine mark is found at serine 665 and serine 670. The segment covering 673 to 692 has biased composition (low complexity); that stretch reads AKSPTAKSPTAKSPAAKSPA. Threonine 677 carries the post-translational modification Phosphothreonine. Phosphoserine occurs at positions 680, 685, 690, 695, 727, 751, 757, 771, 831, and 847. Composition is skewed to basic and acidic residues over residues 696 to 764, 771 to 811, and 826 to 838; these read PVEE…EEVP, SPEK…KEDI, and TKEK…EEKG. A compositionally biased stretch (basic and acidic residues) spans 849–860; sequence GDEKKGGDKSEE.

Forms heterodimers with NEFL; which can further hetero-oligomerize (in vitro). Forms heterodimers with INA (in vitro). Post-translationally, phosphorylated on a number of serine residues in the repeated K-S-P tripeptide motif. Phosphorylation of NFH may result in the formation of interfilament cross-links that are important in the maintenance of axonal caliber. In terms of processing, phosphorylation seems to play a major role in the functioning of the larger neurofilament polypeptides (NF-M and NF-H), the levels of phosphorylation being altered developmentally and coincidentally with a change in the neurofilament function. Phosphorylated in the head and rod regions by the PKC kinase PKN1, leading to the inhibition of polymerization.

Its subcellular location is the cytoplasm. The protein localises to the cytoskeleton. It is found in the cell projection. The protein resides in the axon. In terms of biological role, neurofilaments usually contain three intermediate filament proteins: NEFL, NEFM, and NEFH which are involved in the maintenance of neuronal caliber. May additionally cooperate with the neuronal intermediate filament proteins PRPH and INA to form neuronal filamentous networks. The chain is Neurofilament medium polypeptide (NEFM) from Bos taurus (Bovine).